The primary structure comprises 840 residues: Leucine--tRNA ligase (840 aa).

The short motif at 44–55 (PYPSANGLHVGH) is the 'HIGH' region element. A 'KMSKS' region motif is present at residues 617–621 (KMSKS). K620 lines the ATP pocket.

The protein belongs to the class-I aminoacyl-tRNA synthetase family.

Its subcellular location is the cytoplasm. The enzyme catalyses tRNA(Leu) + L-leucine + ATP = L-leucyl-tRNA(Leu) + AMP + diphosphate. The sequence is that of Leucine--tRNA ligase from Borreliella burgdorferi (strain ZS7) (Borrelia burgdorferi).